We begin with the raw amino-acid sequence, 43 residues long: U5-hexatoxin-Mr1a (43 aa).

Intrachain disulfides connect Cys-1–Cys-16, Cys-8–Cys-21, Cys-15–Cys-36, and Cys-17–Cys-43.

The protein belongs to the neurotoxin 35 family. In terms of processing, contains 4 disulfide bonds. In terms of tissue distribution, expressed by the venom gland.

It localises to the secreted. In terms of biological role, this toxin blocks the neuromuscular transmission, and also acts on muscle. It exerts an effect of first exciting and then inhibiting the contraction of muscle. This toxin is active only against mammals. The polypeptide is U5-hexatoxin-Mr1a (Macrothele raveni (Funnel-web spider)).